Here is a 323-residue protein sequence, read N- to C-terminus: MAEQNAASTTGVKPSPRTPDFSPYLDFDRAQWRELRNSMPQVLTQKEVIELRGIGENIDLAEVAEVYLPLSRLIHLQVAARQQLTAATETFLGTSPSTSVPFVIGVAGSVAVGKSTTARLLQVLLQRWNSHPRVDLVTTDGFLYPGAELTRRGLMSRKGFPESYDQRALLRFVTDVKSGKLEVNAPVYSHTAYDRVPGEFTTVRQPDILIVEGLNVLQTGPTLMVSDLFDFSVYVDARTEDIEKWYIDRFLKLRDTAFRRPGAHFSHYADMADPESIAVARELWQSINLPNLVENILPTRVRASLVLKKGSDHLVERVRMRKI.

The span at 1 to 12 shows a compositional bias: polar residues; sequence MAEQNAASTTGV. Residues 1-24 are disordered; sequence MAEQNAASTTGVKPSPRTPDFSPY. 108-115 provides a ligand contact to ATP; the sequence is GSVAVGKS.

Belongs to the prokaryotic pantothenate kinase family.

Its subcellular location is the cytoplasm. The catalysed reaction is (R)-pantothenate + ATP = (R)-4'-phosphopantothenate + ADP + H(+). The protein operates within cofactor biosynthesis; coenzyme A biosynthesis; CoA from (R)-pantothenate: step 1/5. The sequence is that of Pantothenate kinase from Corynebacterium glutamicum (strain R).